The following is a 325-amino-acid chain: 4-diphosphocytidyl-2-C-methyl-D-erythritol kinase (325 aa).

The active site involves K22. 110-120 (PVAGGMAGGSA) contacts ATP. D152 is an active-site residue. A disordered region spans residues 306–325 (PAPGARVLEAVSTPSPGGRS).

The protein belongs to the GHMP kinase family. IspE subfamily.

It carries out the reaction 4-CDP-2-C-methyl-D-erythritol + ATP = 4-CDP-2-C-methyl-D-erythritol 2-phosphate + ADP + H(+). It participates in isoprenoid biosynthesis; isopentenyl diphosphate biosynthesis via DXP pathway; isopentenyl diphosphate from 1-deoxy-D-xylulose 5-phosphate: step 3/6. In terms of biological role, catalyzes the phosphorylation of the position 2 hydroxy group of 4-diphosphocytidyl-2C-methyl-D-erythritol. This is 4-diphosphocytidyl-2-C-methyl-D-erythritol kinase from Kineococcus radiotolerans (strain ATCC BAA-149 / DSM 14245 / SRS30216).